The chain runs to 266 residues: uncharacterized protein (266 aa).

The next 8 membrane-spanning stretches (helical) occupy residues 9–29 (IAAL…LFIF), 37–57 (TMPH…LVFY), 69–89 (LIKV…ISLL), 123–143 (FLLM…MIFT), 153–173 (YNPF…LVIA), 184–204 (LPLA…LFLL), 216–236 (SVFA…ILIL), and 246–266 (TNSL…MVFV).

The protein resides in the cell membrane. This is an uncharacterized protein from Haemophilus influenzae (strain ATCC 51907 / DSM 11121 / KW20 / Rd).